A 273-amino-acid polypeptide reads, in one-letter code: Shikimate dehydrogenase (NADP(+)) (273 aa).

Shikimate contacts are provided by residues 14-16 (SKS) and threonine 61. Residue lysine 65 is the Proton acceptor of the active site. Residue glutamate 77 coordinates NADP(+). Shikimate contacts are provided by asparagine 86 and aspartate 102. Residues 126–130 (GAGGA), 150–155 (NRTLSK), and methionine 214 each bind NADP(+). Shikimate is bound at residue tyrosine 216. Glycine 238 serves as a coordination point for NADP(+).

The protein belongs to the shikimate dehydrogenase family. As to quaternary structure, homodimer.

It carries out the reaction shikimate + NADP(+) = 3-dehydroshikimate + NADPH + H(+). It participates in metabolic intermediate biosynthesis; chorismate biosynthesis; chorismate from D-erythrose 4-phosphate and phosphoenolpyruvate: step 4/7. Its function is as follows. Involved in the biosynthesis of the chorismate, which leads to the biosynthesis of aromatic amino acids. Catalyzes the reversible NADPH linked reduction of 3-dehydroshikimate (DHSA) to yield shikimate (SA). This chain is Shikimate dehydrogenase (NADP(+)), found in Photobacterium profundum (strain SS9).